The primary structure comprises 364 residues: DNA replication and repair protein RecF (364 aa).

Position 30 to 37 (30 to 37 (GENGSGKT)) interacts with ATP.

The protein belongs to the RecF family.

Its subcellular location is the cytoplasm. The RecF protein is involved in DNA metabolism; it is required for DNA replication and normal SOS inducibility. RecF binds preferentially to single-stranded, linear DNA. It also seems to bind ATP. The polypeptide is DNA replication and repair protein RecF (Pseudoalteromonas translucida (strain TAC 125)).